A 356-amino-acid chain; its full sequence is Phospho-N-acetylmuramoyl-pentapeptide-transferase (356 aa).

10 consecutive transmembrane segments (helical) span residues 25–45, 70–90, 93–113, 138–158, 164–184, 195–215, 235–255, 258–278, 284–304, and 333–353; these read TIAA…SIIA, GTPT…AFLW, LSNI…AIGF, FFVA…GFAL, YLIH…VATG, GLAI…AYLC, LAVL…FNAP, AIFM…TVAV, IVLV…VIQV, and QVVI…LSTL.

It belongs to the glycosyltransferase 4 family. MraY subfamily. Mg(2+) is required as a cofactor.

The protein resides in the cell inner membrane. It catalyses the reaction UDP-N-acetyl-alpha-D-muramoyl-L-alanyl-gamma-D-glutamyl-meso-2,6-diaminopimeloyl-D-alanyl-D-alanine + di-trans,octa-cis-undecaprenyl phosphate = di-trans,octa-cis-undecaprenyl diphospho-N-acetyl-alpha-D-muramoyl-L-alanyl-D-glutamyl-meso-2,6-diaminopimeloyl-D-alanyl-D-alanine + UMP. Its pathway is cell wall biogenesis; peptidoglycan biosynthesis. In terms of biological role, catalyzes the initial step of the lipid cycle reactions in the biosynthesis of the cell wall peptidoglycan: transfers peptidoglycan precursor phospho-MurNAc-pentapeptide from UDP-MurNAc-pentapeptide onto the lipid carrier undecaprenyl phosphate, yielding undecaprenyl-pyrophosphoryl-MurNAc-pentapeptide, known as lipid I. This is Phospho-N-acetylmuramoyl-pentapeptide-transferase from Bartonella tribocorum (strain CIP 105476 / IBS 506).